We begin with the raw amino-acid sequence, 377 residues long: Queuine tRNA-ribosyltransferase (377 aa).

The active-site Proton acceptor is Asp93. Residues 93–97, Asp147, Gln190, and Gly216 each bind substrate; that span reads DSGGF. The tract at residues 247–253 is RNA binding; it reads GVGTPDD. Asp266 functions as the Nucleophile in the catalytic mechanism. The tract at residues 271–275 is RNA binding; important for wobble base 34 recognition; it reads TRAGR. Zn(2+) contacts are provided by Cys304, Cys306, Cys309, and His335.

The protein belongs to the queuine tRNA-ribosyltransferase family. Homodimer. Within each dimer, one monomer is responsible for RNA recognition and catalysis, while the other monomer binds to the replacement base PreQ1. Zn(2+) is required as a cofactor.

The enzyme catalyses 7-aminomethyl-7-carbaguanine + guanosine(34) in tRNA = 7-aminomethyl-7-carbaguanosine(34) in tRNA + guanine. It participates in tRNA modification; tRNA-queuosine biosynthesis. Catalyzes the base-exchange of a guanine (G) residue with the queuine precursor 7-aminomethyl-7-deazaguanine (PreQ1) at position 34 (anticodon wobble position) in tRNAs with GU(N) anticodons (tRNA-Asp, -Asn, -His and -Tyr). Catalysis occurs through a double-displacement mechanism. The nucleophile active site attacks the C1' of nucleotide 34 to detach the guanine base from the RNA, forming a covalent enzyme-RNA intermediate. The proton acceptor active site deprotonates the incoming PreQ1, allowing a nucleophilic attack on the C1' of the ribose to form the product. After dissociation, two additional enzymatic reactions on the tRNA convert PreQ1 to queuine (Q), resulting in the hypermodified nucleoside queuosine (7-(((4,5-cis-dihydroxy-2-cyclopenten-1-yl)amino)methyl)-7-deazaguanosine). The polypeptide is Queuine tRNA-ribosyltransferase (Granulibacter bethesdensis (strain ATCC BAA-1260 / CGDNIH1)).